Consider the following 218-residue polypeptide: N-(5'-phosphoribosyl)anthranilate isomerase (218 aa).

The protein belongs to the TrpF family.

It catalyses the reaction N-(5-phospho-beta-D-ribosyl)anthranilate = 1-(2-carboxyphenylamino)-1-deoxy-D-ribulose 5-phosphate. It functions in the pathway amino-acid biosynthesis; L-tryptophan biosynthesis; L-tryptophan from chorismate: step 3/5. This is N-(5'-phosphoribosyl)anthranilate isomerase from Rhodopseudomonas palustris (strain BisB18).